Consider the following 427-residue polypeptide: Glucose-1-phosphate adenylyltransferase (427 aa).

Alpha-D-glucose 1-phosphate is bound by residues Tyr-112, Gly-177, 192–193, and Ser-210; that span reads EK.

Belongs to the bacterial/plant glucose-1-phosphate adenylyltransferase family. In terms of assembly, homotetramer.

The catalysed reaction is alpha-D-glucose 1-phosphate + ATP + H(+) = ADP-alpha-D-glucose + diphosphate. Its pathway is glycan biosynthesis; glycogen biosynthesis. Functionally, involved in the biosynthesis of ADP-glucose, a building block required for the elongation reactions to produce glycogen. Catalyzes the reaction between ATP and alpha-D-glucose 1-phosphate (G1P) to produce pyrophosphate and ADP-Glc. This Methylobacillus flagellatus (strain ATCC 51484 / DSM 6875 / VKM B-1610 / KT) protein is Glucose-1-phosphate adenylyltransferase.